Consider the following 128-residue polypeptide: MRFAIVVTGPAYGTQQASSAFQFAQALIAEGHKLSSVFFYREGVYNANQLTSPASDEFDLVRGWQQLNAQHGVALNICVAAALRRGVVDETEAGRLGLASSNLQQGFTLSGLGALAEASLTCDRVVQF.

C78 serves as the catalytic Cysteine persulfide intermediate.

Belongs to the DsrE/TusD family. In terms of assembly, heterohexamer, formed by a dimer of trimers. The hexameric TusBCD complex contains 2 copies each of TusB, TusC and TusD. The TusBCD complex interacts with TusE.

It localises to the cytoplasm. Functionally, part of a sulfur-relay system required for 2-thiolation of 5-methylaminomethyl-2-thiouridine (mnm(5)s(2)U) at tRNA wobble positions. Accepts sulfur from TusA and transfers it in turn to TusE. The chain is Sulfurtransferase TusD from Shigella dysenteriae serotype 1 (strain Sd197).